The following is a 57-amino-acid chain: uncharacterized protein (57 aa).

This is an uncharacterized protein from Dictyostelium discoideum (Social amoeba).